An 841-amino-acid chain; its full sequence is Probable alpha-glucuronidase A (841 aa).

The first 20 residues, 1 to 20 (MRGLNLFQLILALLLSMVAA), serve as a signal peptide directing secretion. N-linked (GlcNAc...) asparagine glycans are attached at residues Asn51, Asn76, Asn85, Asn149, Asn222, Asn279, Asn310, Asn343, Asn450, Asn465, Asn527, Asn576, Asn682, Asn723, and Asn732.

This sequence belongs to the glycosyl hydrolase 67 family.

The protein resides in the secreted. It catalyses the reaction an alpha-D-glucuronoside + H2O = D-glucuronate + an alcohol. In terms of biological role, alpha-glucuronidase involved in the hydrolysis of xylan, a major structural heterogeneous polysaccharide found in plant biomass representing the second most abundant polysaccharide in the biosphere, after cellulose. Releases 4-O-methylglucuronic acid from xylan. In Aspergillus niger, this protein is Probable alpha-glucuronidase A (aguA).